The chain runs to 130 residues: Glycoprotein hormone beta-5 (130 aa).

The first 24 residues, 1–24 (MKLVYLVLGAVALLLLGGPDSVLS), serve as a signal peptide directing secretion. Intrachain disulfides connect Cys36–Cys84, Cys50–Cys99, Cys60–Cys115, Cys64–Cys117, and Cys120–Cys127. N-linked (GlcNAc...) asparagine glycosylation is present at Asn87.

This sequence belongs to the glycoprotein hormones subunit beta family. Heterodimer with GPHA2; this heterodimer interacts with thyroid-stimulating hormone receptor (TSHR), and hence stimulates cAMP production. In terms of processing, N-glycosylated. In terms of tissue distribution, expressed in the anterior lobe of pituitary.

The protein resides in the secreted. Functions as a heterodimeric glycoprotein hormone with GPHA2 able to bind and activate the thyroid-stimulating hormone receptor (TSHR), leading to increased cAMP production. Plays a central role in controlling thyroid cell metabolism. In Mus musculus (Mouse), this protein is Glycoprotein hormone beta-5 (Gphb5).